The chain runs to 370 residues: 2-aminoethylphosphonate--pyruvate transaminase 2 (370 aa).

N6-(pyridoxal phosphate)lysine is present on Lys194.

This sequence belongs to the class-V pyridoxal-phosphate-dependent aminotransferase family. PhnW subfamily. Homodimer. Pyridoxal 5'-phosphate serves as cofactor.

The enzyme catalyses (2-aminoethyl)phosphonate + pyruvate = phosphonoacetaldehyde + L-alanine. Its function is as follows. Involved in phosphonate degradation. This Paraburkholderia xenovorans (strain LB400) protein is 2-aminoethylphosphonate--pyruvate transaminase 2.